A 449-amino-acid chain; its full sequence is Tubulin beta-5 chain (449 aa).

Positions 11, 70, 139, 143, 144, 145, 205, and 227 each coordinate GTP. Glu-70 provides a ligand contact to Mg(2+). The tract at residues 427 to 449 (QDATADEEGEYDVEEEEEGDYET) is disordered. Residues 430 to 449 (TADEEGEYDVEEEEEGDYET) show a composition bias toward acidic residues.

Belongs to the tubulin family. As to quaternary structure, dimer of alpha and beta chains. A typical microtubule is a hollow water-filled tube with an outer diameter of 25 nm and an inner diameter of 15 nM. Alpha-beta heterodimers associate head-to-tail to form protofilaments running lengthwise along the microtubule wall with the beta-tubulin subunit facing the microtubule plus end conferring a structural polarity. Microtubules usually have 13 protofilaments but different protofilament numbers can be found in some organisms and specialized cells. Mg(2+) serves as cofactor.

Its subcellular location is the cytoplasm. It localises to the cytoskeleton. Functionally, tubulin is the major constituent of microtubules, a cylinder consisting of laterally associated linear protofilaments composed of alpha- and beta-tubulin heterodimers. Microtubules grow by the addition of GTP-tubulin dimers to the microtubule end, where a stabilizing cap forms. Below the cap, tubulin dimers are in GDP-bound state, owing to GTPase activity of alpha-tubulin. The polypeptide is Tubulin beta-5 chain (TUBB5) (Arabidopsis thaliana (Mouse-ear cress)).